The sequence spans 293 residues: SAGA-associated factor 29 (293 aa).

A coiled-coil region spans residues L3–E86. The region spanning G152–K293 is the SGF29 C-terminal domain. Histone H3K4me3 N-terminus binding stretches follow at residues D194 to D196 and Q240 to C243. Residues F264–D266 form a histone H3K4me3 binding region. K288 is subject to N6-acetyllysine.

The protein belongs to the SGF29 family. As to quaternary structure, interacts with dimethylated and trimethylated 'Lys-4' of histone H3 (H3K4me2 and H3K4me3), with a preference for the trimethylated form (H3K4me3). Component of some SAGA-type complexes. Component of the ADA2A-containing complex (ATAC), composed of KAT14, KAT2A, TADA2L, TADA3L, ZZ3, MBIP, WDR5, YEATS2, CCDC101 and DR1. Interacts with (methylated) CGAS. Interacts with TADA3L, GCN5L2, SUPT3H and MYC.

Its subcellular location is the nucleus. In terms of biological role, chromatin reader component of some histone acetyltransferase (HAT) SAGA-type complexes like the TFTC-HAT, ATAC or STAGA complexes. SGF29 specifically recognizes and binds methylated 'Lys-4' of histone H3 (H3K4me), with a preference for trimethylated form (H3K4me3). In the SAGA-type complexes, SGF29 is required to recruit complexes to H3K4me. Involved in the response to endoplasmic reticulum (ER) stress by recruiting the SAGA complex to H3K4me, thereby promoting histone H3 acetylation and cell survival. Also binds non-histone proteins that are methylated on Lys residues: specifically recognizes and binds CGAS monomethylated on 'Lys-491'. The polypeptide is SAGA-associated factor 29 (Mus musculus (Mouse)).